The chain runs to 216 residues: Probable GTP-binding protein EngB (216 aa).

Positions 24-205 (ATPEIAFVGR…WARLAALAAE (182 aa)) constitute an EngB-type G domain. Residues 32 to 39 (GRSNVGKS), 59 to 63 (GRTRA), 86 to 89 (DLPG), 153 to 156 (TKTD), and 184 to 186 (FSA) contribute to the GTP site. The Mg(2+) site is built by Ser-39 and Thr-61.

The protein belongs to the TRAFAC class TrmE-Era-EngA-EngB-Septin-like GTPase superfamily. EngB GTPase family. Mg(2+) is required as a cofactor.

Necessary for normal cell division and for the maintenance of normal septation. The chain is Probable GTP-binding protein EngB from Anaeromyxobacter dehalogenans (strain 2CP-C).